The chain runs to 499 residues: L-arabinose isomerase (499 aa).

4 residues coordinate Mn(2+): E306, E333, H350, and H449.

This sequence belongs to the arabinose isomerase family. Mn(2+) is required as a cofactor.

It carries out the reaction beta-L-arabinopyranose = L-ribulose. It functions in the pathway carbohydrate degradation; L-arabinose degradation via L-ribulose; D-xylulose 5-phosphate from L-arabinose (bacterial route): step 1/3. Catalyzes the conversion of L-arabinose to L-ribulose. In Aeromonas salmonicida (strain A449), this protein is L-arabinose isomerase.